The primary structure comprises 320 residues: Sucrose operon repressor (320 aa).

In terms of domain architecture, HTH lacI-type spans Met-1–Gly-57. Positions Leu-5–Asn-24 form a DNA-binding region, H-T-H motif.

Functionally, negative regulator of scrB expression. This chain is Sucrose operon repressor (scrR), found in Streptococcus mutans serotype c (strain ATCC 700610 / UA159).